A 201-amino-acid polypeptide reads, in one-letter code: Phosphoheptose isomerase (201 aa).

Positions 36 to 195 (IAKSLNEGGK…EDILFEIPAA (160 aa)) constitute an SIS domain. Substrate is bound at residue 51–53 (NGG). Zn(2+) contacts are provided by histidine 60 and glutamate 64. Residues glutamate 64, 93–94 (ND), 119–121 (STS), serine 124, and glutamine 171 contribute to the substrate site. The Zn(2+) site is built by glutamine 171 and histidine 179.

This sequence belongs to the SIS family. GmhA subfamily. Zn(2+) serves as cofactor.

The protein localises to the cytoplasm. The enzyme catalyses 2 D-sedoheptulose 7-phosphate = D-glycero-alpha-D-manno-heptose 7-phosphate + D-glycero-beta-D-manno-heptose 7-phosphate. It functions in the pathway carbohydrate biosynthesis; D-glycero-D-manno-heptose 7-phosphate biosynthesis; D-glycero-alpha-D-manno-heptose 7-phosphate and D-glycero-beta-D-manno-heptose 7-phosphate from sedoheptulose 7-phosphate: step 1/1. Catalyzes the isomerization of sedoheptulose 7-phosphate in D-glycero-D-manno-heptose 7-phosphate. The chain is Phosphoheptose isomerase from Thermodesulfovibrio yellowstonii (strain ATCC 51303 / DSM 11347 / YP87).